Here is a 75-residue protein sequence, read N- to C-terminus: Exodeoxyribonuclease 7 small subunit (75 aa).

The protein belongs to the XseB family. Heterooligomer composed of large and small subunits.

The protein localises to the cytoplasm. The catalysed reaction is Exonucleolytic cleavage in either 5'- to 3'- or 3'- to 5'-direction to yield nucleoside 5'-phosphates.. Functionally, bidirectionally degrades single-stranded DNA into large acid-insoluble oligonucleotides, which are then degraded further into small acid-soluble oligonucleotides. In Chlamydia caviae (strain ATCC VR-813 / DSM 19441 / 03DC25 / GPIC) (Chlamydophila caviae), this protein is Exodeoxyribonuclease 7 small subunit.